Reading from the N-terminus, the 529-residue chain is Fibroblast growth factor receptor-like 1 (529 aa).

The N-terminal stretch at 1-20 (MTRSPALLLLLLGALPSAEA) is a signal peptide. Topologically, residues 21–374 (ARGPPRMADK…SSSSTSLPWP (354 aa)) are extracellular. Ig-like C2-type domains lie at 25-111 (PRMA…YTLI), 143-233 (PRFT…YKVD), and 242-350 (PVLT…AFLT). A disulfide bridge links Cys-47 with Cys-95. An N-linked (GlcNAc...) asparagine glycan is attached at Asn-107. Residues 116–151 (ISPGKESPGPGGSSGGQEDPASQQWARPRFTQPSKM) are disordered. A disulfide bridge connects residues Cys-168 and Cys-217. N-linked (GlcNAc...) asparagine glycans are attached at residues Asn-227, Asn-251, and Asn-289. An intrachain disulfide couples Cys-264 to Cys-334. The chain crosses the membrane as a helical span at residues 375–395 (VVIGIPAGAVFILGTVLLWLC). Residues 396-529 (QTKKKPCAPA…RIENNGGRVS (134 aa)) are Cytoplasmic-facing. The tract at residues 405–427 (ASTLPVPGHRPPGTSRERSGDKD) is disordered.

In terms of assembly, interacts with FGF2 with a low affinity. Highly expressed in the kidney, brain and lung. Weakly expressed in the muscle, thymus, lymph node, stomach, intestine, colon and liver. Expressed in fetal cartilaginous structures like the nasal cartilage, the ribs and the sternum as well as in the cartilaginous rudiments of developing bones such as the vertebrae and the pelvic bone. High expression is found in the muscles of the tongue and the diaphragm.

The protein resides in the cell membrane. Its function is as follows. Has a negative effect on cell proliferation. In Mus musculus (Mouse), this protein is Fibroblast growth factor receptor-like 1 (Fgfrl1).